Reading from the N-terminus, the 1897-residue chain is uncharacterized protein (1897 aa).

The 228-residue stretch at 1661-1888 (SDERVKTNIR…AKVISLESRL (228 aa)) folds into the Peptidase S74 domain. Residues 1865–1894 (AALQEIDRQLQLEKAKVISLESRLSALELK) are a coiled coil.

This is an uncharacterized protein from Micromonas pusilla (Picoplanktonic green alga).